The sequence spans 481 residues: Cobyric acid synthase (481 aa).

One can recognise a GATase cobBQ-type domain in the interval 248-435 (ALTVAWLAFS…LHGMFGSDRF (188 aa)). Residue C330 is the Nucleophile of the active site. H427 is an active-site residue.

The protein belongs to the CobB/CobQ family. CobQ subfamily.

It participates in cofactor biosynthesis; adenosylcobalamin biosynthesis. Functionally, catalyzes amidations at positions B, D, E, and G on adenosylcobyrinic A,C-diamide. NH(2) groups are provided by glutamine, and one molecule of ATP is hydrogenolyzed for each amidation. In Cereibacter sphaeroides (strain ATCC 17025 / ATH 2.4.3) (Rhodobacter sphaeroides), this protein is Cobyric acid synthase.